Here is a 67-residue protein sequence, read N- to C-terminus: Large ribosomal subunit protein uL29 (67 aa).

This sequence belongs to the universal ribosomal protein uL29 family.

This is Large ribosomal subunit protein uL29 from Wolbachia pipientis subsp. Culex pipiens (strain wPip).